The sequence spans 338 residues: Protein WVD2-like 2 (338 aa).

A compositionally biased stretch (basic and acidic residues) spans 1 to 14 (MGRELVDKHMDKKA). Residues 1-150 (MGRELVDKHM…SFSVASSSAT (150 aa)) are disordered. 2 stretches are compositionally biased toward polar residues: residues 15–37 (NSLTASSTGSSDDNKVPSPSTNE) and 59–69 (QGITETPGSHK). Residues 100–115 (NNSLGNGASHNSSSAS) are compositionally biased toward low complexity. Residues 128-138 (RIPDHKMHHDE) are compositionally biased toward basic and acidic residues. Residues 177–214 (REFYQKLEEKQKALEAEKRENEKRLKEEQEAVTKQLRK) adopt a coiled-coil conformation. Residues 222–338 (PVPSFYQEGP…GENGVGVVEE (117 aa)) are disordered. Residues 288 to 300 (TNSVPRTPNSSSK) are compositionally biased toward polar residues.

It belongs to the TPX2 family. In terms of tissue distribution, expressed in seedlings.

The protein resides in the cytoplasm. The protein localises to the cytoskeleton. In terms of biological role, microtubule-associated protein (MAP) that regulates the orientation of interphase cortical microtubules. The polypeptide is Protein WVD2-like 2 (Arabidopsis thaliana (Mouse-ear cress)).